A 339-amino-acid polypeptide reads, in one-letter code: Transposase for insertion sequence element IS1086 (339 aa).

The Integrase catalytic domain maps to aspartate 176–leucine 329.

Belongs to the transposase IS30 family.

Functionally, required for the transposition of the insertion element. This Cupriavidus metallidurans (strain ATCC 43123 / DSM 2839 / NBRC 102507 / CH34) (Ralstonia metallidurans) protein is Transposase for insertion sequence element IS1086 (IS1086).